The primary structure comprises 405 residues: Terpene cyclase pbrA (405 aa).

The Mg(2+) site is built by D103, E168, N229, S233, E237, and D241. The D(D/E)XX(D/E) motif signature appears at 103 to 108 (DDEISS). The NSE motif signature appears at 227-237 (LVNDLFSFYKE). The WxxxxxRY motif motif lies at 316–323 (EDLGGSSA).

This sequence belongs to the trichodiene synthase family. Mg(2+) serves as cofactor.

It functions in the pathway secondary metabolite biosynthesis; terpenoid biosynthesis. Functionally, terpene cyclase; part of the gene cluster that mediates the biosynthesis of the sesquiterpenoid aspterric acid (AA), an inhibitor of dihydroxy-acid dehydratase (DHAD) effective as an herbicide. PbrA cyclizes farnesyl diphosphate (FPP) to produce (-)-daucane. The cytochrome P450 monooxygenase pbrBB then converts (-)-daucane into the alpha-epoxy carboxylate intermediate which is further converted into the tricyclic aspterric acid by the cytochrome P450 monooxygenase pbrC. The sequence is that of Terpene cyclase pbrA from Penicillium brasilianum.